Consider the following 268-residue polypeptide: Adenosylcobinamide-GDP ribazoletransferase (268 aa).

Transmembrane regions (helical) follow at residues 1–21 (MAGN…TLPV), 36–56 (YLFI…GTLF), 59–79 (ILPA…LTGI), 112–132 (AGGL…AMTF), 138–158 (WLFV…ITII), 182–202 (LAAV…AAII), 212–232 (IMAG…ILII), and 244–264 (VIGA…GAVL).

The protein belongs to the CobS family. It depends on Mg(2+) as a cofactor.

The protein resides in the cell membrane. It carries out the reaction alpha-ribazole + adenosylcob(III)inamide-GDP = adenosylcob(III)alamin + GMP + H(+). It catalyses the reaction alpha-ribazole 5'-phosphate + adenosylcob(III)inamide-GDP = adenosylcob(III)alamin 5'-phosphate + GMP + H(+). Its pathway is cofactor biosynthesis; adenosylcobalamin biosynthesis; adenosylcobalamin from cob(II)yrinate a,c-diamide: step 7/7. Its function is as follows. Joins adenosylcobinamide-GDP and alpha-ribazole to generate adenosylcobalamin (Ado-cobalamin). Also synthesizes adenosylcobalamin 5'-phosphate from adenosylcobinamide-GDP and alpha-ribazole 5'-phosphate. The protein is Adenosylcobinamide-GDP ribazoletransferase of Methanocella arvoryzae (strain DSM 22066 / NBRC 105507 / MRE50).